The chain runs to 217 residues: Large ribosomal subunit protein uL3 (217 aa).

Belongs to the universal ribosomal protein uL3 family. In terms of assembly, part of the 50S ribosomal subunit. Forms a cluster with proteins L14 and L19.

Functionally, one of the primary rRNA binding proteins, it binds directly near the 3'-end of the 23S rRNA, where it nucleates assembly of the 50S subunit. The protein is Large ribosomal subunit protein uL3 of Mycolicibacterium smegmatis (strain ATCC 700084 / mc(2)155) (Mycobacterium smegmatis).